The sequence spans 485 residues: MQLYNTMTRTKEPFVSRVPGKVAMYVCGITAYDLCHIGHARSSVVFDVLVRYLRHIGFDVTFVRNFTDVDDKIIKKANAEGTTSQEIAERYIATFYEDMDKLGILRPNAEPKATEYIGEMASLAQRLIDSGHAYRTPSGDVYFRVRSFAGYGKLSGRDVEDMRSGARVAPGEEKEDPLDFALWKASKPGEPVWESPFGPGRPGWHLECSAMSEKLLGMPIDIHGGGQDLIFPHHENEIAQSEAAIGGEFCRYWVHNGFVRINTEKMSKSLGNFITIRDIYARYLPEVLRFFLLSSQYRSPLDYSDQGLDEAEKGIKRIYAAKVQMEQALGRAKWSETKLPADVTEELSRHEEGFTAAMDDDLNTAQAMGHVFGLVRLAGRLMEDKTLAKSRETAEVLGRILADFGVWAEVLGVFGTDATAFLADLKACRLTRLGIDAARVDGLVAERQDARKAKDFARSDAIRDELASLGVTVMDTPTGPQWDIA.

Position 27 (Cys-27) interacts with Zn(2+). A 'HIGH' region motif is present at residues 29–39 (ITAYDLCHIGH). Zn(2+) is bound by residues Cys-208, His-233, and Glu-237. A 'KMSKS' region motif is present at residues 265-269 (KMSKS). Lys-268 provides a ligand contact to ATP.

It belongs to the class-I aminoacyl-tRNA synthetase family. Monomer. The cofactor is Zn(2+).

It localises to the cytoplasm. It carries out the reaction tRNA(Cys) + L-cysteine + ATP = L-cysteinyl-tRNA(Cys) + AMP + diphosphate. This Solidesulfovibrio magneticus (strain ATCC 700980 / DSM 13731 / RS-1) (Desulfovibrio magneticus) protein is Cysteine--tRNA ligase.